Reading from the N-terminus, the 199-residue chain is dTTP/UTP pyrophosphatase (199 aa).

Catalysis depends on D73, which acts as the Proton acceptor.

This sequence belongs to the Maf family. YhdE subfamily. The cofactor is a divalent metal cation.

Its subcellular location is the cytoplasm. The catalysed reaction is dTTP + H2O = dTMP + diphosphate + H(+). It catalyses the reaction UTP + H2O = UMP + diphosphate + H(+). Nucleoside triphosphate pyrophosphatase that hydrolyzes dTTP and UTP. May have a dual role in cell division arrest and in preventing the incorporation of modified nucleotides into cellular nucleic acids. The polypeptide is dTTP/UTP pyrophosphatase (Caldicellulosiruptor bescii (strain ATCC BAA-1888 / DSM 6725 / KCTC 15123 / Z-1320) (Anaerocellum thermophilum)).